Reading from the N-terminus, the 573-residue chain is PCNA-interacting partner (573 aa).

Disordered stretches follow at residues 470-505 (VGKA…SKGK) and 531-560 (PKVP…RGKL).

This sequence belongs to the PARI family. As to quaternary structure, interacts with RAD51 and PCNA. Interacts with PARP1. Interacts with TASOR. In terms of tissue distribution, expressed in the ovary, Sertoli cells of the testis and in granular cells within the cerebellum.

The protein localises to the cytoplasm. It is found in the nucleus. Functionally, required to suppress inappropriate homologous recombination, thereby playing a central role DNA repair and in the maintenance of genomic stability. Antagonizes homologous recombination by interfering with the formation of the RAD51-DNA homologous recombination structure. Binds single-strand DNA and poly(A) homopolymers. Positively regulate the poly(ADP-ribosyl)ation activity of PARP1; however such function may be indirect. The polypeptide is PCNA-interacting partner (Parpbp) (Mus musculus (Mouse)).